The chain runs to 865 residues: Outer membrane usher protein HtrE (865 aa).

Residues 1 to 29 form the signal peptide; it reads MTIEYTKNYHHLTRIATFCALLYCNTAFS. Cysteines 838 and 862 form a disulfide.

Belongs to the fimbrial export usher family.

The protein localises to the cell outer membrane. Its function is as follows. Part of the yadCKLM-htrE-yadVN fimbrial operon. Could contribute to adhesion to various surfaces in specific environmental niches. Probably involved in the export and assembly of fimbrial subunits across the outer membrane. The chain is Outer membrane usher protein HtrE (htrE) from Escherichia coli (strain K12).